The chain runs to 338 residues: MSASGLPFDDFRELLRNLPGPDTAALVAARERDGQLTKPPGALGRLEEIAFWLAAWTGRPPAVNRPLVAIFAGNHGVTRQGVTPFPASVTAQMVENFAAGGAAINQICVAHDLGLKVFDLALDYPTGDITEEPALSERDCAATMAFGMEAIAGGTDLLCIGEMGIGNTTIAAAINLGLYGGTAEEWVGPGTGSEGEVLMRKIAAVEKAVALHRDHLSDPLEVMRRLGGREIAAMAGAILAARMQKVPVIIDGYVATAAAAILKAANPAALDHCLIGHVSSEPGHMRAIEKLGKTPLLALGMRLGEGTGAALAAGIVKAAAACHSGMATFAQAGVSNKE.

E305 serves as the catalytic Proton acceptor.

Belongs to the CobT family.

It carries out the reaction 5,6-dimethylbenzimidazole + nicotinate beta-D-ribonucleotide = alpha-ribazole 5'-phosphate + nicotinate + H(+). The protein operates within nucleoside biosynthesis; alpha-ribazole biosynthesis; alpha-ribazole from 5,6-dimethylbenzimidazole: step 1/2. Its function is as follows. Catalyzes the synthesis of alpha-ribazole-5'-phosphate from nicotinate mononucleotide (NAMN) and 5,6-dimethylbenzimidazole (DMB). The protein is Nicotinate-nucleotide--dimethylbenzimidazole phosphoribosyltransferase of Rhizobium meliloti (strain 1021) (Ensifer meliloti).